The sequence spans 341 residues: Cysteine-rich with EGF-like domain protein 2 (341 aa).

The N-terminal stretch at 1–24 (MLLSCSIFRLFCIILLLQLGSIYT) is a signal peptide. The region spanning 136 to 178 (DCNTCIGGADRPCHGNGKCDGDGTRAGNGKCSCDEGYDGEFCL) is the EGF-like domain. Disulfide bonds link cysteine 140-cysteine 154, cysteine 148-cysteine 166, and cysteine 168-cysteine 177. Residue asparagine 190 is glycosylated (N-linked (GlcNAc...) asparagine). FU repeat units follow at residues 193-248 (FFLC…DQYC) and 254-308 (SFSC…NQHC). The EGF-like 2; calcium-binding; truncated domain occupies 291-317 (DIDECTEDPASCSDNQHCLNTDGSFSC).

It belongs to the CRELD family.

It localises to the secreted. The protein resides in the endoplasmic reticulum. Functionally, possible role in neuronal acetylcholine receptor transport. The protein is Cysteine-rich with EGF-like domain protein 2 (creld2) of Danio rerio (Zebrafish).